The chain runs to 169 residues: Der GTPase-activating protein YihI (169 aa).

2 disordered regions span residues 1-100 (MKPS…AELE) and 144-169 (GLSY…LRGN). Residues 10-19 (SKGHAKARRK) show a composition bias toward basic residues. Residues 20 to 30 (TREELDQEARD) show a composition bias toward basic and acidic residues. The span at 31 to 40 (RKRQKKRRGH) shows a compositional bias: basic residues. The span at 49 to 58 (GNTSSGSKGQ) shows a compositional bias: polar residues. A compositionally biased stretch (acidic residues) spans 147 to 159 (YDDDEEEEEDEKQ). Residues 160-169 (EDMMRLLRGN) show a composition bias toward basic and acidic residues.

It belongs to the YihI family. In terms of assembly, interacts with Der.

In terms of biological role, a GTPase-activating protein (GAP) that modifies Der/EngA GTPase function. May play a role in ribosome biogenesis. This chain is Der GTPase-activating protein YihI, found in Escherichia coli (strain SMS-3-5 / SECEC).